A 225-amino-acid chain; its full sequence is Germin-like protein 8-6 (225 aa).

The first 23 residues, 1 to 23 (MASPSSLCLLTALLALVSWQTIA), serve as a signal peptide directing secretion. Cys-33 and Cys-48 are disulfide-bonded. In terms of domain architecture, Cupin type-1 spans 63–213 (AMLDTPRKTN…AFQVEKGTID (151 aa)). A glycan (N-linked (GlcNAc...) asparagine) is linked at Asn-77. His-110, His-112, and Glu-117 together coordinate Mn(2+). Asn-136 carries an N-linked (GlcNAc...) asparagine glycan. Residue His-158 participates in Mn(2+) binding.

It belongs to the germin family. As to quaternary structure, oligomer (believed to be a pentamer but probably hexamer).

It is found in the secreted. The protein resides in the extracellular space. Its subcellular location is the apoplast. Functionally, plays a role in broad-spectrum disease resistance. Probably has no oxalate oxidase activity even if the active site is conserved. In Oryza sativa subsp. japonica (Rice), this protein is Germin-like protein 8-6.